We begin with the raw amino-acid sequence, 274 residues long: Small ribosomal subunit biogenesis GTPase RsgA (274 aa).

Positions 58–215 constitute a CP-type G domain; it reads KNYLNRPKVA…LVDSPGFSIY (158 aa). GTP-binding positions include 108 to 111 and 158 to 166; these read SKLD and GHSGVGKST. Cysteine 238, cysteine 243, histidine 245, and cysteine 252 together coordinate Zn(2+).

Belongs to the TRAFAC class YlqF/YawG GTPase family. RsgA subfamily. Monomer. Associates with 30S ribosomal subunit, binds 16S rRNA. The cofactor is Zn(2+).

It localises to the cytoplasm. In terms of biological role, one of several proteins that assist in the late maturation steps of the functional core of the 30S ribosomal subunit. Helps release RbfA from mature subunits. May play a role in the assembly of ribosomal proteins into the subunit. Circularly permuted GTPase that catalyzes slow GTP hydrolysis, GTPase activity is stimulated by the 30S ribosomal subunit. The sequence is that of Small ribosomal subunit biogenesis GTPase RsgA from Mycoplasmoides gallisepticum (strain R(low / passage 15 / clone 2)) (Mycoplasma gallisepticum).